The primary structure comprises 438 residues: Mitochondrial distribution and morphology protein 12 (438 aa).

Positions 1–438 (MSIEVDWAAA…VYPSFWTFLV (438 aa)) constitute an SMP-LTD domain. 3 disordered regions span residues 110-154 (SFSH…TSTL), 185-277 (SDSG…MRER), and 353-379 (GSEQ…KDKE). Polar residues predominate over residues 212–226 (DTTNSTSRPSTANTL). Positions 227–245 (PSHPSLGHSGSSGSNPHTS) are enriched in low complexity. Polar residues predominate over residues 354 to 364 (SEQSQGSQNPS). Over residues 365-379 (DDGRPRSGGDQKDKE) the composition is skewed to basic and acidic residues.

Belongs to the MDM12 family. In terms of assembly, component of the ER-mitochondria encounter structure (ERMES) or MDM complex, composed of mmm1, mdm10, mdm12 and mdm34. A mmm1 homodimer associates with one molecule of mdm12 on each side in a pairwise head-to-tail manner, and the SMP-LTD domains of mmm1 and mdm12 generate a continuous hydrophobic tunnel for phospholipid trafficking.

The protein resides in the mitochondrion outer membrane. It is found in the endoplasmic reticulum membrane. In terms of biological role, component of the ERMES/MDM complex, which serves as a molecular tether to connect the endoplasmic reticulum (ER) and mitochondria. Components of this complex are involved in the control of mitochondrial shape and protein biogenesis, and function in nonvesicular lipid trafficking between the ER and mitochondria. Mdm12 is required for the interaction of the ER-resident membrane protein mmm1 and the outer mitochondrial membrane-resident beta-barrel protein mdm10. The mdm12-mmm1 subcomplex functions in the major beta-barrel assembly pathway that is responsible for biogenesis of all mitochondrial outer membrane beta-barrel proteins, and acts in a late step after the SAM complex. The mdm10-mdm12-mmm1 subcomplex further acts in the TOM40-specific pathway after the action of the mdm12-mmm1 complex. Essential for establishing and maintaining the structure of mitochondria and maintenance of mtDNA nucleoids. In Penicillium rubens (strain ATCC 28089 / DSM 1075 / NRRL 1951 / Wisconsin 54-1255) (Penicillium chrysogenum), this protein is Mitochondrial distribution and morphology protein 12.